We begin with the raw amino-acid sequence, 184 residues long: FMRFamide-like neuropeptides 3 (184 aa).

An N-terminal signal peptide occupies residues 1–23; that stretch reads MISPNHLILLFCVNCAFLVASDA. The propeptide occupies 24-25; the sequence is TP. F35 is subject to Phenylalanine amide. Positions 39–73 are excised as a propeptide; the sequence is AIADEMTFEEDGYYPSNVMWKRSTVDSSEPVIRDQ. 4 positions are modified to phenylalanine amide: F82, F95, F111, and F126. Residues 90-110 are disordered; the sequence is FGTMRFGKRNPENDTPFGTMR. The propeptide occupies 130-142; it reads EDGNAPFGTMKFG. The interval 150 to 184 is disordered; the sequence is LGTMRFGKRSADDSAPFGTMRFGKRNPLGTMRFGK. Phenylalanine amide is present on residues F155, F171, and F182.

This sequence belongs to the FARP (FMRFamide related peptide) family. As to expression, each flp gene is expressed in a distinct set of neurons. Flp-3 is expressed in the IL1 and PQR neurons.

Its subcellular location is the secreted. FMRFamides and FMRFamide-like peptides are neuropeptides. SAEPFGTMRF-amide inhibits the activity of dissected pharyngeal myogenic muscle system. This Caenorhabditis elegans protein is FMRFamide-like neuropeptides 3.